Here is a 398-residue protein sequence, read N- to C-terminus: Lysophosphatidylserine lipase ABHD12 (398 aa).

Basic and acidic residues predominate over residues 1-15 (MRKRTEPVTLEHERC). The segment at 1 to 24 (MRKRTEPVTLEHERCAASGSSSSG) is disordered. Residues 1–74 (MRKRTEPVTL…RKSLWFRLRK (74 aa)) are Cytoplasmic-facing. A helical membrane pass occupies residues 75–95 (ILLCVLGFYIAIPFLVKLCPG). At 96–398 (IQAKLIFLNF…LGKSEPERQH (303 aa)) the chain is on the extracellular side. N-linked (GlcNAc...) asparagine glycosylation is present at Asn-123. The active-site Nucleophile is Ser-246. Active-site charge relay system residues include Asp-333 and His-372.

Belongs to the serine esterase family. Glycosylated.

Its subcellular location is the endoplasmic reticulum membrane. The protein localises to the mitochondrion. The catalysed reaction is 1-(9Z-octadecenoyl)-sn-glycero-3-phospho-L-serine + H2O = sn-glycero-3-phospho-L-serine + (9Z)-octadecenoate + H(+). It catalyses the reaction 1-(9Z-octadecenoyl)-sn-glycero-3-phospho-(1'-sn-glycerol) + H2O = sn-glycero-3-phospho-(1'-sn-glycerol) + (9Z)-octadecenoate + H(+). It carries out the reaction 1-(9Z-octadecenoyl)-sn-glycero-3-phospho-(1D-myo-inositol) + H2O = sn-glycero-3-phospho-1D-myo-inositol + (9Z)-octadecenoate + H(+). The enzyme catalyses 1-(9Z-octadecenoyl)-sn-glycero-3-phosphoethanolamine + H2O = sn-glycero-3-phosphoethanolamine + (9Z)-octadecenoate + H(+). The catalysed reaction is 1-(9Z-octadecenoyl)-sn-glycero-3-phosphocholine + H2O = 1-(9Z-octadecenoyl)-sn-glycerol + phosphocholine + H(+). It catalyses the reaction 2-(9Z-octadecenoyl)-glycerol + H2O = glycerol + (9Z)-octadecenoate + H(+). It carries out the reaction 1-hexadecanoyl-sn-glycero-3-phospho-L-serine + H2O = sn-glycero-3-phospho-L-serine + hexadecanoate + H(+). The enzyme catalyses 2-(5Z,8Z,11Z,14Z-eicosatetraenoyl)-glycerol + H2O = glycerol + (5Z,8Z,11Z,14Z)-eicosatetraenoate + H(+). The catalysed reaction is Hydrolyzes glycerol monoesters of long-chain fatty acids.. It catalyses the reaction 1-decanoylglycerol + H2O = decanoate + glycerol + H(+). It carries out the reaction 1-dodecanoylglycerol + H2O = dodecanoate + glycerol + H(+). The enzyme catalyses 1-tetradecanoylglycerol + H2O = tetradecanoate + glycerol + H(+). The catalysed reaction is 2-hexadecanoylglycerol + H2O = glycerol + hexadecanoate + H(+). It catalyses the reaction 1-(9Z-octadecenoyl)-glycerol + H2O = glycerol + (9Z)-octadecenoate + H(+). It carries out the reaction 2-(9Z,12Z-octadecadienoyl)-glycerol + H2O = (9Z,12Z)-octadecadienoate + glycerol + H(+). The enzyme catalyses 1-(5Z,8Z,11Z,14Z-eicosatetraenoyl)-glycerol + H2O = glycerol + (5Z,8Z,11Z,14Z)-eicosatetraenoate + H(+). The catalysed reaction is 1-(9Z,12Z-octadecadienoyl)-glycerol + H2O = (9Z,12Z)-octadecadienoate + glycerol + H(+). It catalyses the reaction 1-hexadecanoylglycerol + H2O = glycerol + hexadecanoate + H(+). It carries out the reaction 1-octadecanoylglycerol + H2O = octadecanoate + glycerol + H(+). The enzyme catalyses 1-octadecanoyl-2-(9,10-epoxyoctadecanoyl)-sn-glycero-3-phospho-L-serine + H2O = 9,10-epoxyoctadecanoate + 1-octadecanoyl-sn-glycero-3-phosphoserine + H(+). The catalysed reaction is 1-octadecanoyl-2-(10-hydroxyoctadecanoyl)-sn-glycero-3-phospho-L-serine + H2O = 1-octadecanoyl-sn-glycero-3-phosphoserine + 10-hydroxyoctadecanoate + H(+). It catalyses the reaction 1-hexadecanoyl-2-(10-hydroxyoctadecanoyl)-sn-glycero-3-phospho-L-serine + H2O = 10-hydroxyoctadecanoate + 1-hexadecanoyl-sn-glycero-3-phospho-L-serine + H(+). With respect to regulation, selectively inhibited by DO264 (N-3-pyridyl-N'-(1-[3-chloro-4-{2-chloro-4-(trifluoromethoxy)phenoxy}pyridine-2-yl]piperidin-4-yl)thiourea). Lysophosphatidylserine (LPS) lipase that mediates the hydrolysis of lysophosphatidylserine, a class of signaling lipids that regulates immunological and neurological processes. Represents a major lysophosphatidylserine lipase in the brain, thereby playing a key role in the central nervous system. Also able to hydrolyze oxidized phosphatidylserine; oxidized phosphatidylserine is produced in response to severe inflammatory stress and constitutes a proapoptotic 'eat me' signal. Also has monoacylglycerol (MAG) lipase activity: hydrolyzes 2-arachidonoylglycerol (2-AG), thereby acting as a regulator of endocannabinoid signaling pathways. Has a strong preference for very-long-chain lipid substrates; substrate specificity is likely due to improved catalysis and not improved substrate binding. In Mus musculus (Mouse), this protein is Lysophosphatidylserine lipase ABHD12.